The chain runs to 429 residues: MPAIVLIGAQWGDEGKGKATDLLGEQLQWVVRYQGGNNAGHTVVLPNGDKFALHLIPSGILTPAVNNVIGNGVVVDPGVLLTELAGLEERGVDTSRLLLSADAHLIMPYHVAIDKVTERFLGAKKIGTTGRGIGPCYQDKIARVGVRAADVLDEKILTQKVEAALEFKNQVLVKIYNRKALDPQQVVEEVLTQAEGFKHRISDTRLELNLALERGETVLLEGSQGTLLDVDHGTYPYVTSSNPTSGGAAVGSGIGPTKITTVLGILKAYTTRVGSGPFPTELFDDHGAYLAKQGGEVGVTTGRARRTGWFDAVIARYATRVNGITDYFLTKLDVLSSLDTVPICVAYEVDGVRHDEMPMSQSDIHHAKPIYEEMPGWWEDISEARTFEELPQNAQNYVLRLEELSGAFISCIGVGPGRDETIVRREIVR.

GTP-binding positions include 12–18 (GDEGKGK) and 40–42 (GHT). D13 acts as the Proton acceptor in catalysis. Positions 13 and 40 each coordinate Mg(2+). Residues 13 to 16 (DEGK), 38 to 41 (NAGH), T129, R143, Q224, T239, and R303 contribute to the IMP site. Residue H41 is the Proton donor of the active site. A substrate-binding site is contributed by 299 to 305 (VTTGRAR). GTP-binding positions include R305, 331-333 (KLD), and 413-415 (GVG).

The protein belongs to the adenylosuccinate synthetase family. Homodimer. Mg(2+) is required as a cofactor.

The protein resides in the cytoplasm. It catalyses the reaction IMP + L-aspartate + GTP = N(6)-(1,2-dicarboxyethyl)-AMP + GDP + phosphate + 2 H(+). It participates in purine metabolism; AMP biosynthesis via de novo pathway; AMP from IMP: step 1/2. Plays an important role in the de novo pathway of purine nucleotide biosynthesis. Catalyzes the first committed step in the biosynthesis of AMP from IMP. The sequence is that of Adenylosuccinate synthetase from Rhodococcus erythropolis (strain PR4 / NBRC 100887).